Reading from the N-terminus, the 384-residue chain is D-galactosamine-6-phosphate deaminase AgaS (384 aa).

2 consecutive SIS domains span residues 45–197 (LEPL…SQTF) and 215–364 (SEGV…PDTP).

Belongs to the SIS family. AgaS subfamily.

The enzyme catalyses D-galactosamine 6-phosphate + H2O = D-tagatopyranose 1-phosphate + NH4(+). Catalyzes the isomerization-deamination of galactosamine 6-phosphate to form tagatofuranose 6-phosphate and ammonium ion. The sequence is that of D-galactosamine-6-phosphate deaminase AgaS from Escherichia coli O157:H7.